A 220-amino-acid chain; its full sequence is Small ribosomal subunit protein uS3 (220 aa).

A KH type-2 domain is found at 38 to 106; sequence IREFVKKSLN…EVFLNIVEVR (69 aa).

The protein belongs to the universal ribosomal protein uS3 family. In terms of assembly, part of the 30S ribosomal subunit. Forms a tight complex with proteins S10 and S14.

Binds the lower part of the 30S subunit head. Binds mRNA in the 70S ribosome, positioning it for translation. This Myxococcus xanthus (strain DK1622) protein is Small ribosomal subunit protein uS3.